The following is a 493-amino-acid chain: Vinyl phenol reductase (493 aa).

A19, E38, S46, T50, G52, A156, D224, N448, and V467 together coordinate FAD.

It belongs to the FAD-dependent oxidoreductase 2 family. FRD/SDH subfamily. FAD serves as cofactor.

It carries out the reaction 4-vinylphenol + NADH + H(+) = 4-ethylphenol + NAD(+). The catalysed reaction is 3,4-dihydroxystyrene + NADH + H(+) = 4-ethylcatechol + NAD(+). It catalyses the reaction 2-methoxy-4-vinylphenol + NADH + H(+) = 4-ethyl-2-methoxyphenol + NAD(+). Functionally, involved in the production of ethylphenols during the degradation of hydroxycinnamic acids. Catalyzes the reduction of vinylphenols (4-vinylphenol (4-hydroxystyrene), 4-vinylcatechol (3,4-dihydroxystyrene), and 4-vinylguaiacol (2-methoxy-4-vinylphenol)) to their corresponding ethylphenols (4-ethylphenol, 4-ethylcatechol, and 4-ethylguaiacol, respectively) in the presence of NADH. These compounds are considered the most important flavor components of fermented soy sauce, and, on the other hand, are considered off flavor and responsible for sensorial wine and cider alteration. The 4-ethylphenol produced by the gut bacteria L.plantarum strain WCFS1 can get subsequent sulfation to 4-ethylphenyl sulfate (4EPS) by host sulfotransferase (SULT1A1); 4EPS can enter the brain and seems to alter brain activity. Therefore, this enzyme likely plays a role in gut microbiota-host metabolic interactions. This chain is Vinyl phenol reductase, found in Lactiplantibacillus plantarum (strain ATCC BAA-793 / NCIMB 8826 / WCFS1) (Lactobacillus plantarum).